Reading from the N-terminus, the 148-residue chain is Transcriptional regulator MraZ (148 aa).

2 SpoVT-AbrB domains span residues 5 to 53 (ETAI…VEKE) and 82 to 125 (SALL…SEQA).

The protein belongs to the MraZ family. Forms oligomers.

Its subcellular location is the cytoplasm. It is found in the nucleoid. The polypeptide is Transcriptional regulator MraZ (Xylella fastidiosa (strain 9a5c)).